The sequence spans 116 residues: Large ribosomal subunit protein uL18 (116 aa).

It belongs to the universal ribosomal protein uL18 family. In terms of assembly, part of the 50S ribosomal subunit; part of the 5S rRNA/L5/L18/L25 subcomplex. Contacts the 5S and 23S rRNAs.

This is one of the proteins that bind and probably mediate the attachment of the 5S RNA into the large ribosomal subunit, where it forms part of the central protuberance. This chain is Large ribosomal subunit protein uL18, found in Pseudomonas entomophila (strain L48).